Consider the following 310-residue polypeptide: MFKTEPFIEESIEEIRKQINNRKTIIALSGGVDSAVAAVLTDRAVGDKLLAVYVDTGLMRKNESEEIWKIFKEQMGLNLKIVEAKDIFLKELEGVIDPEEKRKIIGRLFIEVFEKVAEEQGEEVLVQGTIAPDWIESEGQIKTHHNIALPGGMVLDVVEPLRELYKDEVRLLAVALGLPDQIAHRQPFPGPGLAVRILGEITDEKLAICKEANFIVSEEIEKTELKNELWQYFAAVLDTKATGVKGDIRDYNWVVALRFVSSLDAMTAHTPEIPFDLIKKISKRITSEIPNVTRVVLDVTDKPPATIEFE.

The GMPS ATP-PPase domain maps to 2–185 (FKTEPFIEES…LGLPDQIAHR (184 aa)). An ATP-binding site is contributed by 29-35 (SGGVDSA).

Heterodimer composed of a glutamine amidotransferase subunit (A) and a GMP-binding subunit (B).

The catalysed reaction is XMP + L-glutamine + ATP + H2O = GMP + L-glutamate + AMP + diphosphate + 2 H(+). It functions in the pathway purine metabolism; GMP biosynthesis; GMP from XMP (L-Gln route): step 1/1. Its function is as follows. Catalyzes the synthesis of GMP from XMP. This chain is GMP synthase [glutamine-hydrolyzing] subunit B, found in Methanococcus maripaludis (strain DSM 14266 / JCM 13030 / NBRC 101832 / S2 / LL).